Here is a 487-residue protein sequence, read N- to C-terminus: NADH-quinone oxidoreductase subunit N (487 aa).

The next 14 membrane-spanning stretches (helical) occupy residues 8-28, 35-55, 78-98, 104-124, 125-145, 159-179, 203-223, 235-255, 271-291, 297-317, 328-348, 376-396, 409-428, and 451-471; these read LIAM…MLSI, FINA…LYFV, GLVI…LVGY, EFYL…SANH, LASL…LIGY, YMLL…LLYA, ILAG…LVPF, PAPV…AVVM, LVLS…AISQ, LLGY…VAVQ, IGVY…VVSL, AVMT…GFIG, LWWL…YYYL, and ALTA…VLGI.

Belongs to the complex I subunit 2 family. NDH-1 is composed of 13 different subunits. Subunits NuoA, H, J, K, L, M, N constitute the membrane sector of the complex.

The protein localises to the cell inner membrane. The enzyme catalyses a quinone + NADH + 5 H(+)(in) = a quinol + NAD(+) + 4 H(+)(out). In terms of biological role, NDH-1 shuttles electrons from NADH, via FMN and iron-sulfur (Fe-S) centers, to quinones in the respiratory chain. The immediate electron acceptor for the enzyme in this species is believed to be ubiquinone. Couples the redox reaction to proton translocation (for every two electrons transferred, four hydrogen ions are translocated across the cytoplasmic membrane), and thus conserves the redox energy in a proton gradient. The chain is NADH-quinone oxidoreductase subunit N from Yersinia pestis bv. Antiqua (strain Angola).